Consider the following 137-residue polypeptide: ATP synthase epsilon chain (137 aa).

It belongs to the ATPase epsilon chain family. As to quaternary structure, F-type ATPases have 2 components, CF(1) - the catalytic core - and CF(0) - the membrane proton channel. CF(1) has five subunits: alpha(3), beta(3), gamma(1), delta(1), epsilon(1). CF(0) has three main subunits: a, b and c.

Its subcellular location is the cellular thylakoid membrane. In terms of biological role, produces ATP from ADP in the presence of a proton gradient across the membrane. This is ATP synthase epsilon chain (atpC) from Synechococcus elongatus (strain ATCC 33912 / PCC 7942 / FACHB-805) (Anacystis nidulans R2).